The sequence spans 166 residues: Disulfide bond reductase DsbH (166 aa).

An N-terminal signal peptide occupies residues 1–22 (MKFWLQGCAFVGCLLLTLPCCA). Residues 32 to 166 (LQQTRPIAAA…SKVKSALKLR (135 aa)) form the Thioredoxin domain. Cys-72 and Cys-75 are oxidised to a cystine. 73 to 74 (MW) provides a ligand contact to substrate.

In terms of assembly, monomer.

It localises to the periplasm. In terms of biological role, catalyzes the reduction of disulfide bonds. May function in reducing intermolecular disulfides between proteins and small molecules in the periplasm, or keeping a specific subset of periplasmic proteins reduced, or maintaining the periplasm of Chlamydia in a generally reducing state. Seems to be unable to oxidize thiols into disulfides and does not display disulfide bond isomerase activity. This Chlamydia pneumoniae (Chlamydophila pneumoniae) protein is Disulfide bond reductase DsbH (dsbH).